A 127-amino-acid polypeptide reads, in one-letter code: Putative iron-sulfur cluster insertion protein ErpA (127 aa).

Over residues M1 to P14 the composition is skewed to polar residues. The segment at M1–T20 is disordered. C55, C119, and C121 together coordinate iron-sulfur cluster.

The protein belongs to the HesB/IscA family. Homodimer. Iron-sulfur cluster serves as cofactor.

Its function is as follows. Required for insertion of 4Fe-4S clusters. This chain is Putative iron-sulfur cluster insertion protein ErpA, found in Nitrosospira multiformis (strain ATCC 25196 / NCIMB 11849 / C 71).